The chain runs to 201 residues: Recombination protein RecR (201 aa).

The C4-type zinc finger occupies 60-75 (CKYCQSLTEKDVCDIC). Positions 83-177 (SKLCIIESML…KISRIGFGVP (95 aa)) constitute a Toprim domain.

The protein belongs to the RecR family.

Its function is as follows. May play a role in DNA repair. It seems to be involved in an RecBC-independent recombinational process of DNA repair. It may act with RecF and RecO. The polypeptide is Recombination protein RecR (Francisella philomiragia subsp. philomiragia (strain ATCC 25017 / CCUG 19701 / FSC 153 / O#319-036)).